Consider the following 510-residue polypeptide: 2,3-bisphosphoglycerate-independent phosphoglycerate mutase (510 aa).

Residues aspartate 12 and serine 62 each coordinate Mn(2+). The Phosphoserine intermediate role is filled by serine 62. Residues histidine 123, 153–154 (RD), arginine 185, arginine 191, 261–264 (RPDR), and lysine 336 contribute to the substrate site. 5 residues coordinate Mn(2+): aspartate 403, histidine 407, aspartate 444, histidine 445, and histidine 462.

It belongs to the BPG-independent phosphoglycerate mutase family. In terms of assembly, monomer. Mn(2+) serves as cofactor.

The enzyme catalyses (2R)-2-phosphoglycerate = (2R)-3-phosphoglycerate. The protein operates within carbohydrate degradation; glycolysis; pyruvate from D-glyceraldehyde 3-phosphate: step 3/5. Functionally, essential for rapid growth and for sporulation. Catalyzes the interconversion of 2-phosphoglycerate and 3-phosphoglycerate. The chain is 2,3-bisphosphoglycerate-independent phosphoglycerate mutase from Priestia megaterium (strain DSM 319 / IMG 1521) (Bacillus megaterium).